The following is a 406-amino-acid chain: Arginine biosynthesis bifunctional protein ArgJ (406 aa).

Substrate is bound by residues Thr156, Lys182, Thr193, Glu279, Asn401, and Thr406. Thr193 functions as the Nucleophile in the catalytic mechanism.

The protein belongs to the ArgJ family. Heterotetramer of two alpha and two beta chains.

Its subcellular location is the cytoplasm. It carries out the reaction N(2)-acetyl-L-ornithine + L-glutamate = N-acetyl-L-glutamate + L-ornithine. The catalysed reaction is L-glutamate + acetyl-CoA = N-acetyl-L-glutamate + CoA + H(+). The protein operates within amino-acid biosynthesis; L-arginine biosynthesis; L-ornithine and N-acetyl-L-glutamate from L-glutamate and N(2)-acetyl-L-ornithine (cyclic): step 1/1. It functions in the pathway amino-acid biosynthesis; L-arginine biosynthesis; N(2)-acetyl-L-ornithine from L-glutamate: step 1/4. With respect to regulation, feedback inhibition by L-arginine. Functionally, catalyzes two activities which are involved in the cyclic version of arginine biosynthesis: the synthesis of N-acetylglutamate from glutamate and acetyl-CoA as the acetyl donor, and of ornithine by transacetylation between N(2)-acetylornithine and glutamate. In Bacillus amyloliquefaciens (Bacillus velezensis), this protein is Arginine biosynthesis bifunctional protein ArgJ.